The primary structure comprises 255 residues: Pyridoxine 5'-phosphate synthase (255 aa).

Positions 8 and 19 each coordinate 3-amino-2-oxopropyl phosphate. H44 (proton acceptor) is an active-site residue. Residues R46 and H51 each contribute to the 1-deoxy-D-xylulose 5-phosphate site. E74 serves as the catalytic Proton acceptor. Residue T111 coordinates 1-deoxy-D-xylulose 5-phosphate. H202 (proton donor) is an active-site residue. 3-amino-2-oxopropyl phosphate contacts are provided by residues D203 and 225-226; that span reads GH.

It belongs to the PNP synthase family. In terms of assembly, homooctamer; tetramer of dimers.

It localises to the cytoplasm. The enzyme catalyses 3-amino-2-oxopropyl phosphate + 1-deoxy-D-xylulose 5-phosphate = pyridoxine 5'-phosphate + phosphate + 2 H2O + H(+). It functions in the pathway cofactor biosynthesis; pyridoxine 5'-phosphate biosynthesis; pyridoxine 5'-phosphate from D-erythrose 4-phosphate: step 5/5. Its function is as follows. Catalyzes the complicated ring closure reaction between the two acyclic compounds 1-deoxy-D-xylulose-5-phosphate (DXP) and 3-amino-2-oxopropyl phosphate (1-amino-acetone-3-phosphate or AAP) to form pyridoxine 5'-phosphate (PNP) and inorganic phosphate. The chain is Pyridoxine 5'-phosphate synthase from Xanthomonas oryzae pv. oryzae (strain PXO99A).